The primary structure comprises 177 residues: Large ribosomal subunit protein uL6 (177 aa).

The protein belongs to the universal ribosomal protein uL6 family. Part of the 50S ribosomal subunit.

Its function is as follows. This protein binds to the 23S rRNA, and is important in its secondary structure. It is located near the subunit interface in the base of the L7/L12 stalk, and near the tRNA binding site of the peptidyltransferase center. In Salmonella arizonae (strain ATCC BAA-731 / CDC346-86 / RSK2980), this protein is Large ribosomal subunit protein uL6.